The following is a 368-amino-acid chain: H-2 class I histocompatibility antigen, K-D alpha chain (368 aa).

Positions 1-21 (MAPCTLLLLLAAALAPTQTRA) are cleaved as a signal peptide. The alpha-1 stretch occupies residues 22–111 (GPHSLRYFVT…AQRYYNQSKG (90 aa)). The Extracellular segment spans residues 22 to 305 (GPHSLRYFVT…KLPPSTVSNT (284 aa)). The N-linked (GlcNAc...) asparagine glycan is linked to N107. The alpha-2 stretch occupies residues 112 to 203 (GSHTFQRMFG…ELGNETLLRT (92 aa)). Cysteines 122 and 185 form a disulfide. N-linked (GlcNAc...) asparagine glycosylation is found at N197 and N277. The segment at 204 to 295 (DSPKAHVTYH…GLPEPLTLRW (92 aa)) is alpha-3. The 89-residue stretch at 206–294 (PKAHVTYHPR…KGLPEPLTLR (89 aa)) folds into the Ig-like C1-type domain. A disulfide bridge links C224 with C280. The tract at residues 296–305 (KLPPSTVSNT) is connecting peptide. Residues 306–328 (VIIAVLVVLGAAIVTGAVVAFVM) form a helical membrane-spanning segment. The Cytoplasmic portion of the chain corresponds to 329–368 (KMRRNTGGKGVNYALAPGSQTSDLSLPDGKVMVHDPHSLA). Residues S350 and S353 each carry the phosphoserine modification.

The protein belongs to the MHC class I family. As to quaternary structure, heterodimer of an alpha chain and a beta chain (beta-2-microglobulin).

It is found in the membrane. Its function is as follows. Involved in the presentation of foreign antigens to the immune system. The protein is H-2 class I histocompatibility antigen, K-D alpha chain (H2-K1) of Mus musculus (Mouse).